The following is a 152-amino-acid chain: Large-conductance mechanosensitive channel (152 aa).

3 helical membrane-spanning segments follow: residues 26 to 46 (VLDL…VGSA), 50 to 70 (ILTP…LFIT), and 92 to 112 (IGVF…IFWL).

The protein belongs to the MscL family. As to quaternary structure, homopentamer.

It is found in the cell inner membrane. Channel that opens in response to stretch forces in the membrane lipid bilayer. May participate in the regulation of osmotic pressure changes within the cell. This chain is Large-conductance mechanosensitive channel, found in Gluconobacter oxydans (strain 621H) (Gluconobacter suboxydans).